We begin with the raw amino-acid sequence, 444 residues long: Probable kynurenine--oxoglutarate transaminase BNA3 (444 aa).

Residue lysine 271 is modified to N6-(pyridoxal phosphate)lysine.

Belongs to the class-I pyridoxal-phosphate-dependent aminotransferase family. Homodimer. Pyridoxal 5'-phosphate is required as a cofactor.

Its subcellular location is the cytoplasm. It is found in the mitochondrion. The enzyme catalyses L-kynurenine + 2-oxoglutarate = kynurenate + L-glutamate + H2O. It participates in amino-acid degradation; L-kynurenine degradation; kynurenate from L-kynurenine: step 1/2. Catalyzes the irreversible transamination of the L-tryptophan metabolite L-kynurenine to form kynurenic acid (KA). The chain is Probable kynurenine--oxoglutarate transaminase BNA3 (BNA3) from Saccharomyces cerevisiae (strain ATCC 204508 / S288c) (Baker's yeast).